The sequence spans 396 residues: Ornithine aminotransferase (396 aa).

K255 carries the N6-(pyridoxal phosphate)lysine modification.

The protein belongs to the class-III pyridoxal-phosphate-dependent aminotransferase family. OAT subfamily. It depends on pyridoxal 5'-phosphate as a cofactor.

It is found in the cytoplasm. It catalyses the reaction a 2-oxocarboxylate + L-ornithine = L-glutamate 5-semialdehyde + an L-alpha-amino acid. It functions in the pathway amino-acid biosynthesis; L-proline biosynthesis; L-glutamate 5-semialdehyde from L-ornithine: step 1/1. Its function is as follows. Catalyzes the interconversion of ornithine to glutamate semialdehyde. The chain is Ornithine aminotransferase from Staphylococcus epidermidis (strain ATCC 12228 / FDA PCI 1200).